The primary structure comprises 119 residues: Holo-[acyl-carrier-protein] synthase (119 aa).

Mg(2+)-binding residues include D8 and E58.

The protein belongs to the P-Pant transferase superfamily. AcpS family. Mg(2+) is required as a cofactor.

Its subcellular location is the cytoplasm. The enzyme catalyses apo-[ACP] + CoA = holo-[ACP] + adenosine 3',5'-bisphosphate + H(+). Its function is as follows. Transfers the 4'-phosphopantetheine moiety from coenzyme A to a Ser of acyl-carrier-protein. The chain is Holo-[acyl-carrier-protein] synthase from Lactobacillus johnsonii (strain CNCM I-12250 / La1 / NCC 533).